The following is a 317-amino-acid chain: Probable cell division protein WhiA (317 aa).

Positions 275-308 form a DNA-binding region, H-T-H motif; that stretch reads SLKELGEMLVPKVGKSGVNHRMRKIDELAEKLEE.

The protein belongs to the WhiA family.

In terms of biological role, involved in cell division and chromosome segregation. The polypeptide is Probable cell division protein WhiA (Desulfitobacterium hafniense (strain Y51)).